A 154-amino-acid chain; its full sequence is Style cell-cycle inhibitor 1-A (154 aa).

2 stretches are compositionally biased toward basic and acidic residues: residues 1 to 11 (MGSDKKTPEEK) and 24 to 48 (DEVKSKRQNIKGDEERRKEKKDKSK). Positions 1 to 84 (MGSDKKTPEE…DKSKNKFEEL (84 aa)) are disordered. Residues 63–77 (GEKHKTKSHKHKDKS) are compositionally biased toward basic residues.

Specifically expressed in flowers pistils, especially in stigmas and styles. Barely detected in roots, stems, leaves, sepals, petals and stamen.

It is found in the nucleus. In terms of biological role, component of the auxin signaling transduction pathway that regulates cell proliferation and differentiation during flowers stigmas and styles development. Involved in the regulation of auxin-related genes. In Nicotiana tabacum (Common tobacco), this protein is Style cell-cycle inhibitor 1-A.